The primary structure comprises 349 residues: MNIKKTAVKSALAVAAAAAALTTNVSAKDFSGAELYTLEEVQYGKFEARMKMAAASGTVSSMFLYQNGSEIADGRPWVEVDIEVLGKNPGSFQSNIITGKAGAQKTSEKHHAVSPAADQAFHTYGLEWTPNYVRWTVDGQEVRKTEGGQVSNLTGTQGLRFNLWSSESAAWVGQFDESKLPLFQFINWVKVYKYTPGQGEGGSDFTLDWTDNFDTFDGSRWGKGDWTFDGNRVDLTDKNIYSRDGMLILALTRKGQESFNGQVPRDDEPAPQSSSSAPASSSSVPASSSSVPASSSSAFVPPSSSSATNAIHGMRTTPAVAKEHRNLVNAKGAKVNPNGHKRYRVNFEH.

An N-terminal signal peptide occupies residues 1–27; that stretch reads MNIKKTAVKSALAVAAAAAALTTNVSA. Positions 28–197 constitute a GH16 domain; that stretch reads KDFSGAELYT…WVKVYKYTPG (170 aa). The Nucleophile role is filled by Glu79. The active-site Proton donor is the Glu83. The tract at residues 258-311 is disordered; it reads SFNGQVPRDDEPAPQSSSSAPASSSSVPASSSSVPASSSSAFVPPSSSSATNAI. Over residues 270–307 the composition is skewed to low complexity; that stretch reads APQSSSSAPASSSSVPASSSSVPASSSSAFVPPSSSSA. 5 repeat units span residues 271-277, 278-284, 285-291, 292-298, and 301-307. The tract at residues 271-307 is 5 X 7 AA tandem repeats of P-X-S-S-S-S-X; that stretch reads PQSSSSAPASSSSVPASSSSVPASSSSAFVPPSSSSA.

Belongs to the glycosyl hydrolase 16 family.

It catalyses the reaction Hydrolysis of (1-&gt;4)-beta-D-glucosidic linkages in beta-D-glucans containing (1-&gt;3)- and (1-&gt;4)-bonds.. In Fibrobacter succinogenes (strain ATCC 19169 / S85), this protein is Beta-glucanase.